The chain runs to 360 residues: Membrane-bound lytic murein transglycosylase C (360 aa).

The signal sequence occupies residues 1–16 (MKKIFALALIAPLLIS). The N-palmitoyl cysteine moiety is linked to residue C17. Residue C17 is the site of S-diacylglycerol cysteine attachment.

This sequence belongs to the transglycosylase Slt family.

Its subcellular location is the cell outer membrane. The enzyme catalyses Exolytic cleavage of the (1-&gt;4)-beta-glycosidic linkage between N-acetylmuramic acid (MurNAc) and N-acetylglucosamine (GlcNAc) residues in peptidoglycan, from either the reducing or the non-reducing ends of the peptidoglycan chains, with concomitant formation of a 1,6-anhydrobond in the MurNAc residue.. Its function is as follows. Murein-degrading enzyme. May play a role in recycling of muropeptides during cell elongation and/or cell division. The polypeptide is Membrane-bound lytic murein transglycosylase C (Cronobacter sakazakii (strain ATCC BAA-894) (Enterobacter sakazakii)).